A 282-amino-acid polypeptide reads, in one-letter code: 2-dehydro-3-deoxyphosphooctonate aldolase (282 aa).

It belongs to the KdsA family.

It is found in the cytoplasm. It catalyses the reaction D-arabinose 5-phosphate + phosphoenolpyruvate + H2O = 3-deoxy-alpha-D-manno-2-octulosonate-8-phosphate + phosphate. Its pathway is carbohydrate biosynthesis; 3-deoxy-D-manno-octulosonate biosynthesis; 3-deoxy-D-manno-octulosonate from D-ribulose 5-phosphate: step 2/3. It participates in bacterial outer membrane biogenesis; lipopolysaccharide biosynthesis. The sequence is that of 2-dehydro-3-deoxyphosphooctonate aldolase from Chromobacterium violaceum (strain ATCC 12472 / DSM 30191 / JCM 1249 / CCUG 213 / NBRC 12614 / NCIMB 9131 / NCTC 9757 / MK).